Consider the following 102-residue polypeptide: Probable endoribonuclease MazF2 (102 aa).

Belongs to the PemK/MazF family. In terms of assembly, forms a complex with cognate antitoxin MazE2.

Its function is as follows. Toxic component of a type II toxin-antitoxin (TA) system. Acts as an endoribonuclease. Neutralized by coexpression with cognate antitoxin MazE2. This is Probable endoribonuclease MazF2 (mazF2) from Mycobacterium tuberculosis (strain CDC 1551 / Oshkosh).